The following is a 190-amino-acid chain: Probable DNA replication complex GINS protein PSF2 (190 aa).

Belongs to the GINS2/PSF2 family. As to quaternary structure, component of the GINS complex which is a heterotetramer of gins1, gins2, gins3 and gins4.

The protein resides in the nucleus. Its function is as follows. The GINS complex plays an essential role in the initiation of DNA replication. This Brugia malayi (Filarial nematode worm) protein is Probable DNA replication complex GINS protein PSF2.